The sequence spans 251 residues: 5'-nucleotidase SurE (251 aa).

Residues D8, D9, S40, and N95 each coordinate a divalent metal cation.

Belongs to the SurE nucleotidase family. A divalent metal cation serves as cofactor.

The protein resides in the cytoplasm. The catalysed reaction is a ribonucleoside 5'-phosphate + H2O = a ribonucleoside + phosphate. Its function is as follows. Nucleotidase that shows phosphatase activity on nucleoside 5'-monophosphates. This chain is 5'-nucleotidase SurE, found in Maridesulfovibrio salexigens (strain ATCC 14822 / DSM 2638 / NCIMB 8403 / VKM B-1763) (Desulfovibrio salexigens).